Consider the following 371-residue polypeptide: S-adenosylmethionine:tRNA ribosyltransferase-isomerase (371 aa).

This sequence belongs to the QueA family. Monomer.

It is found in the cytoplasm. The enzyme catalyses 7-aminomethyl-7-carbaguanosine(34) in tRNA + S-adenosyl-L-methionine = epoxyqueuosine(34) in tRNA + adenine + L-methionine + 2 H(+). The protein operates within tRNA modification; tRNA-queuosine biosynthesis. Transfers and isomerizes the ribose moiety from AdoMet to the 7-aminomethyl group of 7-deazaguanine (preQ1-tRNA) to give epoxyqueuosine (oQ-tRNA). This Nitratidesulfovibrio vulgaris (strain DP4) (Desulfovibrio vulgaris) protein is S-adenosylmethionine:tRNA ribosyltransferase-isomerase.